A 126-amino-acid chain; its full sequence is Small ribosomal subunit protein uS12 (126 aa).

Aspartate 89 bears the 3-methylthioaspartic acid mark. Residues glycine 106–alanine 126 are disordered.

Belongs to the universal ribosomal protein uS12 family. In terms of assembly, part of the 30S ribosomal subunit. Contacts proteins S8 and S17. May interact with IF1 in the 30S initiation complex.

Its function is as follows. With S4 and S5 plays an important role in translational accuracy. Functionally, interacts with and stabilizes bases of the 16S rRNA that are involved in tRNA selection in the A site and with the mRNA backbone. Located at the interface of the 30S and 50S subunits, it traverses the body of the 30S subunit contacting proteins on the other side and probably holding the rRNA structure together. The combined cluster of proteins S8, S12 and S17 appears to hold together the shoulder and platform of the 30S subunit. The chain is Small ribosomal subunit protein uS12 from Tremblaya princeps.